The sequence spans 243 residues: Voltage-gated monoatomic cation channel TMEM109 (243 aa).

The N-terminal stretch at 1 to 33 (MAGSGSSAPWGKHLLHAVLMVLVALVLLHSALA) is a signal peptide. Topologically, residues 34-83 (QSHRDFAPPGQQRREAPVDLLTQIGRSVRETLDTWIGPETMHLISETLSQ) are lumenal. The chain crosses the membrane as a helical span at residues 84 to 104 (VMWAISSAISVAFFALSGIAA). Residues 105–135 (QLLTALGLDGDHLTQGLKLSPSQVQTFLLWG) lie on the Cytoplasmic side of the membrane. Residues 136 to 156 (AGALVVYWLLSLLLGLVLAVL) form a helical membrane-spanning segment. The Lumenal segment spans residues 157–185 (GRILGGLKLVIFLAGFVALVRSVPDPSTR). The helical transmembrane segment at 186–205 (ALLLLALLTLYALLSRLTGS) threads the bilayer. At 206-243 (RASGAQLEAKVRGLERQVDELRWRQRRAAKGARSVEEE) the chain is on the cytoplasmic side.

Homooligomer. Interacts with CRYAB; in the cellular response to DNA damage. The N-terminus is blocked. Widely expressed. Expressed in skeletal, cardiac and smooth muscle cells, in brain, including neuroglial cells, cerebral cortex neurons and cerebellum, but not Purkinje cells. Also detected in Paneth and Goblet cells of the small intestine (but not in the epithelium), duodenal gland, pancreas, parotid gland, testis, thyroid gland and adrenal gland, as well as in epidermis, choroid plexus, ductus epididymidis, lymphocytes, fibroblasts, endothelial cells and seminiferous epithelial cells (at protein level). Not detected in mucous cells of the duodenal gland, in hepatocytes nor in uriniferous tubules.

The protein resides in the nucleus outer membrane. It localises to the endoplasmic reticulum membrane. The protein localises to the sarcoplasmic reticulum membrane. It carries out the reaction K(+)(in) = K(+)(out). It catalyses the reaction Ca(2+)(in) = Ca(2+)(out). Its function is as follows. Functions as a voltage-gated monoatomic cation channel permeable to both potassium and calcium. Plays a role in the cellular response to DNA damage. The sequence is that of Voltage-gated monoatomic cation channel TMEM109 from Oryctolagus cuniculus (Rabbit).